A 405-amino-acid polypeptide reads, in one-letter code: MQYTEIMIRYGELSTKGKNRKDFINRLASNVQKVLHDFPDLKIQTHHDRMHILLNGTPFEPVNDRLKVVFGIQTYSPVIKTEKSLEAIEKTALELMQATYKAGMTFKVNTRRSDHKFIYDTNQLNQMVADYLYNHMEGLQAEMKHPDMVLLLEIRQDGAYISNQLLHGAGGMPVGTAGKAVMMLSGGIDSPVASYLAMKRGVNIEMVHFFSPPYTSEKALAKAKELTSILAKYSGRINFIEVPFAEIQETIKEKLPEGYLMTVQRRFMLRLADIIREKRHALAIFNGESVGQVASQTLESMSAINDVTTTPVLRPVATMDKTEIIAKAEEIGTFDLSIQPFEDCCTIFAPPRPKTKPKIDKAREYESRLDVDGLIERALAGVKVTPIYPGQSFLDDLDEEDADLL.

The region spanning 60 to 165 (EPVNDRLKVV…QDGAYISNQL (106 aa)) is the THUMP domain. Residues 183-184 (ML), 208-209 (HF), arginine 265, glycine 287, and glutamine 296 each bind ATP.

Belongs to the ThiI family.

It localises to the cytoplasm. It catalyses the reaction [ThiI sulfur-carrier protein]-S-sulfanyl-L-cysteine + a uridine in tRNA + 2 reduced [2Fe-2S]-[ferredoxin] + ATP + H(+) = [ThiI sulfur-carrier protein]-L-cysteine + a 4-thiouridine in tRNA + 2 oxidized [2Fe-2S]-[ferredoxin] + AMP + diphosphate. The enzyme catalyses [ThiS sulfur-carrier protein]-C-terminal Gly-Gly-AMP + S-sulfanyl-L-cysteinyl-[cysteine desulfurase] + AH2 = [ThiS sulfur-carrier protein]-C-terminal-Gly-aminoethanethioate + L-cysteinyl-[cysteine desulfurase] + A + AMP + 2 H(+). It functions in the pathway cofactor biosynthesis; thiamine diphosphate biosynthesis. In terms of biological role, catalyzes the ATP-dependent transfer of a sulfur to tRNA to produce 4-thiouridine in position 8 of tRNAs, which functions as a near-UV photosensor. Also catalyzes the transfer of sulfur to the sulfur carrier protein ThiS, forming ThiS-thiocarboxylate. This is a step in the synthesis of thiazole, in the thiamine biosynthesis pathway. The sulfur is donated as persulfide by IscS. This Lactobacillus delbrueckii subsp. bulgaricus (strain ATCC BAA-365 / Lb-18) protein is Probable tRNA sulfurtransferase.